The sequence spans 523 residues: WD repeat-containing protein YPL247C (523 aa).

Residues 1–64 form a disordered region; it reads MDPFHNGNKR…TTNGGNSKRN (64 aa). The segment covering 9 to 40 has biased composition (polar residues); the sequence is KRSSISFGSSQRQPYNKNNYLSGTNGPSSAAQ. Phosphoserine is present on serine 47. A compositionally biased stretch (low complexity) spans 52–64; the sequence is SGNTTNGGNSKRN. A Phosphoserine modification is found at serine 65. 4 WD repeats span residues 173–213, 241–281, 285–325, and 392–432; these read DVVY…RQFQ, GTFP…YVKT, AHDS…HSTI, and GHGS…MEIN. The segment at 436-472 is disordered; it reads SKSPSIHGTSLEDPDGDTEMTDGGAGSGLNEDPLSLN.

It belongs to the WD repeat WDR68 family.

It is found in the cytoplasm. The protein resides in the nucleus. The sequence is that of WD repeat-containing protein YPL247C from Saccharomyces cerevisiae (strain ATCC 204508 / S288c) (Baker's yeast).